Reading from the N-terminus, the 214-residue chain is Adenylate kinase (214 aa).

10–15 (GAGKGT) provides a ligand contact to ATP. Residues 30 to 59 (STGDIFRANIKNGTELGKKAKTYMDQGALV) are NMP. AMP contacts are provided by residues threonine 31, arginine 36, 57-59 (ALV), 85-88 (GFPR), and glutamine 92. Residues 126 to 163 (GRRACLNCGATYHIVFNPTKVEGKCDACGADTVLRDDD) are LID. Arginine 127 contacts ATP. Residues cysteine 130 and cysteine 133 each coordinate Zn(2+). Position 136–137 (136–137 (TY)) interacts with ATP. Residues cysteine 150 and cysteine 153 each contribute to the Zn(2+) site. Residues arginine 160 and arginine 171 each coordinate AMP. Lysine 199 is a binding site for ATP.

This sequence belongs to the adenylate kinase family. As to quaternary structure, monomer.

The protein resides in the cytoplasm. The enzyme catalyses AMP + ATP = 2 ADP. Its pathway is purine metabolism; AMP biosynthesis via salvage pathway; AMP from ADP: step 1/1. Catalyzes the reversible transfer of the terminal phosphate group between ATP and AMP. Plays an important role in cellular energy homeostasis and in adenine nucleotide metabolism. This chain is Adenylate kinase, found in Agathobacter rectalis (strain ATCC 33656 / DSM 3377 / JCM 17463 / KCTC 5835 / VPI 0990) (Eubacterium rectale).